Here is a 215-residue protein sequence, read N- to C-terminus: Cytochrome b6 (215 aa).

Residues 32–52 (IFYCLGGITLTCFLVQVATGF) traverse the membrane as a helical segment. C35 lines the heme c pocket. The heme b site is built by H86 and H100. 3 helical membrane passes run 90-110 (ASMM…TGGF), 116-136 (LTWV…VTGY), and 186-206 (LHTF…FLMI). Heme b is bound by residues H187 and H202.

The protein belongs to the cytochrome b family. PetB subfamily. The 4 large subunits of the cytochrome b6-f complex are cytochrome b6, subunit IV (17 kDa polypeptide, PetD), cytochrome f and the Rieske protein, while the 4 small subunits are PetG, PetL, PetM and PetN. The complex functions as a dimer. Heme b is required as a cofactor. The cofactor is heme c.

The protein localises to the plastid. The protein resides in the chloroplast thylakoid membrane. Functionally, component of the cytochrome b6-f complex, which mediates electron transfer between photosystem II (PSII) and photosystem I (PSI), cyclic electron flow around PSI, and state transitions. The sequence is that of Cytochrome b6 from Oenothera elata subsp. hookeri (Hooker's evening primrose).